We begin with the raw amino-acid sequence, 446 residues long: MITIKKGLDLPIAGTPSQVINDGKSITKVALLGEEYVGMRPTMHARVGDEVKKGQVLFADKKNPGVVFTSPASGKVIEVNRGAKRVLQSVVIEVAGNEQITFNSYEANQLVSLDRETVKTQLVESGAWTALRTRPFSKVPAVDSETQAIFVTAMDTNPLAAEPELIINEQSDAFVAGLDLLSTLTNGKVYVCKKGTSLPRSAQSNVEEHVFDGPHPAGLAGTHMHYLYPVNAQNVAWSINYQDVIAFGKLFLTGEIYSERVVSLAGPVVNNPRLVRTQIGASLEELTDSELMPGEVRVISGSVLTGTEATGPHAFLGRYHQQVSVLREGRDKELFGWAMPGKNKFSVTRSFLGHLFKGQLFNMTTTTNGSDRSMVPIGNYERVMPLDMEPTLLLRDLCAGDIDSAQALGALELDEEDVALCTFVCPGKYEYGQLLRECLDTIEKEG.

It belongs to the NqrA family. In terms of assembly, composed of six subunits; NqrA, NqrB, NqrC, NqrD, NqrE and NqrF.

It carries out the reaction a ubiquinone + n Na(+)(in) + NADH + H(+) = a ubiquinol + n Na(+)(out) + NAD(+). NQR complex catalyzes the reduction of ubiquinone-1 to ubiquinol by two successive reactions, coupled with the transport of Na(+) ions from the cytoplasm to the periplasm. NqrA to NqrE are probably involved in the second step, the conversion of ubisemiquinone to ubiquinol. The polypeptide is Na(+)-translocating NADH-quinone reductase subunit A (Vibrio atlanticus (strain LGP32) (Vibrio splendidus (strain Mel32))).